Consider the following 476-residue polypeptide: Serine carboxypeptidase 2 (476 aa).

A signal peptide spans 1–34 (MRTTTRRLPPAPAAAAVLLAALTCLLLRPAAVAA). Intrachain disulfides connect Cys97–Cys353, Cys254–Cys266, and Cys290–Cys320. N-linked (GlcNAc...) asparagine glycosylation is found at Asn148 and Asn159. Ser190 is a catalytic residue. N-linked (GlcNAc...) asparagine glycosylation is present at Asn291. Positions 295–313 (SSSSSSLSRRRTRGRYPWL) are cleaved as a propeptide — linker peptide. At Thr314 the chain carries Blocked amino end (Thr). N-linked (GlcNAc...) asparagine glycosylation is found at Asn341 and Asn347. A glycan (N-linked (GlcNAc...) asparagine; partial) is linked at Asn352. Asn352 carries an O-linked (GalNAc...) threonine; in variant 351-AT-352 glycan. Catalysis depends on residues Asp390 and His443. N-linked (GlcNAc...) asparagine glycosylation occurs at Asn472.

The protein belongs to the peptidase S10 family. Carboxypeptidase II is a dimer, where each monomer is composed of two chains linked by a disulfide bond.

The protein resides in the secreted. The catalysed reaction is Preferential release of a C-terminal arginine or lysine residue.. Functionally, may be involved in the degradation of small peptides (2-5 residues) or in the degradation of storage proteins in the embryo. The polypeptide is Serine carboxypeptidase 2 (CBP2) (Hordeum vulgare (Barley)).